Reading from the N-terminus, the 242-residue chain is Tryptophan synthase alpha chain (242 aa).

Active-site proton acceptor residues include Glu-31 and Asp-42.

This sequence belongs to the TrpA family. As to quaternary structure, tetramer of two alpha and two beta chains.

It carries out the reaction (1S,2R)-1-C-(indol-3-yl)glycerol 3-phosphate + L-serine = D-glyceraldehyde 3-phosphate + L-tryptophan + H2O. Its pathway is amino-acid biosynthesis; L-tryptophan biosynthesis; L-tryptophan from chorismate: step 5/5. Its function is as follows. The alpha subunit is responsible for the aldol cleavage of indoleglycerol phosphate to indole and glyceraldehyde 3-phosphate. The sequence is that of Tryptophan synthase alpha chain from Staphylococcus aureus (strain bovine RF122 / ET3-1).